We begin with the raw amino-acid sequence, 144 residues long: uncharacterized protein (144 aa).

Helical transmembrane passes span 16 to 36, 48 to 68, 87 to 107, and 120 to 140; these read FLIFSKVAMLTFLTVGIGAIF, GFIVVAGIVSLIGMTIGALII, LLPEAYYICIELFGYGSLVLL, and VMSLLMAGLFILVVLVIWYFG.

It localises to the cell membrane. This is an uncharacterized protein from Methanocaldococcus jannaschii (strain ATCC 43067 / DSM 2661 / JAL-1 / JCM 10045 / NBRC 100440) (Methanococcus jannaschii).